Reading from the N-terminus, the 188-residue chain is COMM domain-containing protein 1 (188 aa).

The sufficient for interaction with SLC12A2 stretch occupies residues 1 to 122; that stretch reads MAAELEGSKC…CWDRGLRSLS (122 aa). His-100, Met-109, and His-133 together coordinate Cu cation. One can recognise a COMM domain in the interval 117 to 185; sequence GLRSLSWRVD…EVEESISTLM (69 aa). Residues 124–188 form a required for binding to PtdIns(4,5)P2 region; sequence RVDGKSQSRH…ESISTLMQPA (65 aa).

This sequence belongs to the COMM domain-containing protein 1 family. Component of the commander complex consisting of the CCC subcomplex and the retriever subcomplex. Component of the CCC (COMMD/CCDC22/CCDC93) subcomplex consisting of COMMD1, COMMD2, COMMD3, COMMD4, COMMD5, COMMD6, COMMD7, COMMD8, COMMD9, COMMD10, CCDC22 and CCDC93; within the complex forms a heterodimer with COMMD6. Interacts with VPS35L; the interaction associates the CCC complex with the retriever complex. Identified in a complex with an E3 ubiquitin ligase complex composed of TCEB1/elongin C, CUL2, SOCS1 and RBX1; in the complex interacts directly with SOCS1 and CUL2. Identified in a complex with NF-kappa-B. Interacts directly with SLC12A2. Interacts directly with ATP7B (via the N-terminal region). Interacts with ATP7A. Interacts with FAM107A; this interaction stabilizes COMMD1 in the nucleus. Interacts with CCS, CDKN2A, RELA, REL, RELB, NFKB1/p105, NFKB2/p100, NFKBIB, SCNN1D, SCNN1B, CFTR, CLU, SGK1, AKT1, CUL1, CUL2, CUL3, CUL4A, CUL4B, CUL5, CUL7, HIF1A. In terms of processing, ubiquitinated; undergoes both 'Lys-63'- and 'Lys-48'-linked polyubiquitination. Ubiquitinated by XIAP, leading to its proteasomal degradation.

Its subcellular location is the nucleus. The protein resides in the cytoplasm. The protein localises to the endosome membrane. It localises to the cytoplasmic vesicle. It is found in the early endosome. Its subcellular location is the recycling endosome. Its function is as follows. Scaffold protein in the commander complex that is essential for endosomal recycling of transmembrane cargos; the commander complex is composed of the CCC subcomplex and the retriever subcomplex. Can modulate activity of cullin-RING E3 ubiquitin ligase (CRL) complexes by displacing CAND1; in vitro promotes CRL E3 activity and dissociates CAND1 from CUL1 and CUL2. Promotes ubiquitination of NF-kappa-B subunit RELA and its subsequent proteasomal degradation. Down-regulates NF-kappa-B activity. Involved in the regulation of membrane expression and ubiquitination of SLC12A2. Modulates Na(+) transport in epithelial cells by regulation of apical cell surface expression of amiloride-sensitive sodium channel (ENaC) subunits and by promoting their ubiquitination presumably involving NEDD4L. Promotes the localization of SCNN1D to recycling endosomes. Promotes CFTR cell surface expression through regulation of its ubiquitination. Down-regulates SOD1 activity by interfering with its homodimerization. Plays a role in copper ion homeostasis. Involved in copper-dependent ATP7A trafficking between the trans-Golgi network and vesicles in the cell periphery; the function is proposed to depend on its association within the CCC complex and cooperation with the WASH complex on early endosomes. Can bind one copper ion per monomer. May function to facilitate biliary copper excretion within hepatocytes. Binds to phosphatidylinositol 4,5-bisphosphate (PtdIns(4,5)P2). Involved in the regulation of HIF1A-mediated transcription; competes with ARNT/Hif-1-beta for binding to HIF1A resulting in decreased DNA binding and impaired transcriptional activation by HIF-1. Negatively regulates neuroblastoma G1/S phase cell cycle progression and cell proliferation by stimulating ubiquitination of NF-kappa-B subunit RELA and NF-kappa-B degradation in a FAM107A- and actin-dependent manner. This Bos taurus (Bovine) protein is COMM domain-containing protein 1 (COMMD1).